The primary structure comprises 427 residues: Amino acid transporter AVT3A (427 aa).

Residues 1–35 (MRYDQEAGSSSHSLPSGSSSHSLPPTEDTPLLGPR) form a disordered region. Over 1–42 (MRYDQEAGSSSHSLPSGSSSHSLPPTEDTPLLGPRTLSSQPK) the chain is Cytoplasmic. The span at 8–24 (GSSSHSLPSGSSSHSLP) shows a compositional bias: low complexity. Residues 43–63 (TFANVFIAIVGAGVLGLPYTF) form a helical membrane-spanning segment. The Vacuolar segment spans residues 64–69 (KKTGWL). A helical membrane pass occupies residues 70–90 (LGLLTLLFVSSLTFFCMMLLV). The Cytoplasmic segment spans residues 91–122 (HTRRKLESLSGFNSITSFGDLGESVCGPAGRL). A helical membrane pass occupies residues 123 to 143 (VVDVMLVLSQSGFCVSYLIFV). Topologically, residues 144–157 (ATTMANLLSRGTEH) are vacuolar. Residues 158-178 (ILGLDAASIYLWGCFPFQLGL) form a helical membrane-spanning segment. The Cytoplasmic portion of the chain corresponds to 179-186 (NSIPSLTH). The helical transmembrane segment at 187–207 (LAPLSIFADIVDVAATLVVMV) threads the bilayer. The Vacuolar segment spans residues 208–227 (QDVFIFLKRRPPLRVFGGVS). Residues 228–248 (VFFYGLGVAVYAFEGIGMVLP) traverse the membrane as a helical segment. The Cytoplasmic portion of the chain corresponds to 249–262 (LELEAKYKDKFGRA). The chain crosses the membrane as a helical span at residues 263–283 (LGLAMGLISIMYGAFGLLGYM). Residues 284 to 300 (AYGEETKDIITTNLGTG) are Vacuolar-facing. A helical transmembrane segment spans residues 301-321 (VVSTLVQLGLAINLFFTFPLM). Topologically, residues 322–339 (MQPVYEVVERRLCSSRYS) are cytoplasmic. A helical membrane pass occupies residues 340-360 (VWVRWATVLVVTLVALLVPNF). Topologically, residues 361-362 (AD) are vacuolar. A helical transmembrane segment spans residues 363–383 (FLSLVGSSVCVVLGFVLPSLF). The Cytoplasmic segment spans residues 384–396 (HLQAFKNELSITR). A helical transmembrane segment spans residues 397–417 (IVVDVLVFLIGVMIAITGTWT). At 418–427 (AVHEILTSKA) the chain is on the vacuolar side.

It belongs to the amino acid/polyamine transporter 2 family. Amino acid/auxin permease (AAAP) (TC 2.A.18.8) subfamily. In terms of tissue distribution, ubiquitous.

It is found in the vacuole membrane. Functionally, translocates preferentially neutral amino acids and to a lesser extent aromatic amino acids from the vacuole to the cytoplasm. Requires ATP for function. The sequence is that of Amino acid transporter AVT3A from Arabidopsis thaliana (Mouse-ear cress).